Reading from the N-terminus, the 238-residue chain is Mannose-binding protein A (238 aa).

The first 17 residues, 1 to 17 (MLLLPLLVLLCVVSVSS), serve as a signal peptide directing secretion. Residues 38 to 49 (DGRDGPKGEKGE) are compositionally biased toward basic and acidic residues. The interval 38 to 87 (DGRDGPKGEKGEPGQGLRGLQGPPGKLGPPGSVGAPGSQGPKGQKGDRGD) is disordered. Positions 39 to 88 (GRDGPKGEKGEPGQGLRGLQGPPGKLGPPGSVGAPGSQGPKGQKGDRGDS) constitute a Collagen-like domain. Position 43 is a 4-hydroxyproline (proline 43). Residues lysine 44 and lysine 47 each carry the 5-hydroxylysine modification. Lysine 44 and lysine 47 each carry an O-linked (Gal...) hydroxylysine glycan. 4-hydroxyproline is present on residues proline 50, proline 61, proline 67, proline 73, and proline 78. 5-hydroxylysine is present on residues lysine 79 and lysine 82. 2 O-linked (Gal...) hydroxylysine glycosylation sites follow: lysine 79 and lysine 82. The 96-residue stretch at 143 to 238 (ALCSELRGTV…SHTAVCEFPA (96 aa)) folds into the C-type lectin domain. Intrachain disulfides connect cysteine 145–cysteine 234 and cysteine 212–cysteine 226. Ca(2+)-binding residues include aspartate 178, glutamate 182, glutamate 202, asparagine 204, aspartate 205, glutamate 210, aspartate 211, asparagine 222, and aspartate 223. The tract at residues 202–210 (EPNDHGSGE) is calcium-dependent carbohydrate binding.

As to quaternary structure, homotrimer. Forms higher oligomeric complexes formed by the association of two, three or more homotrimers. Oligomerization occurs in the endoplasmic reticulum. Interacts with MASP1 and MASP2. In terms of processing, hydroxylated on lysine and proline residues within the collagen-like domain. O-glycosylated. O-linked glycans on hydroxylysine residues consist of Glc-Gal disaccharides bound to the oxygen atom of post-translationally added hydroxyl groups. In terms of tissue distribution, detected in blood serum (at protein level).

The protein localises to the secreted. Its function is as follows. Calcium-dependent lectin. Plays a role in the innate immune response by binding mannose, fucose and N-acetylglucosamine moieties on different microorganisms and mediating activation of the lectin complement pathway. Binds to late apoptotic cells, as well as to apoptotic blebs and to necrotic cells, but not to early apoptotic cells, facilitating their uptake by macrophages. The chain is Mannose-binding protein A (Mbl1) from Rattus norvegicus (Rat).